The following is a 291-amino-acid chain: N-acetylmannosamine kinase (291 aa).

ATP is bound by residues 5-12 and 132-139; these read AIDIGGTK and GVGGGVVS. Residues H156, C166, C168, and C173 each coordinate Zn(2+).

This sequence belongs to the ROK (NagC/XylR) family. NanK subfamily. As to quaternary structure, homodimer.

It catalyses the reaction an N-acyl-D-mannosamine + ATP = an N-acyl-D-mannosamine 6-phosphate + ADP + H(+). Its pathway is amino-sugar metabolism; N-acetylneuraminate degradation; D-fructose 6-phosphate from N-acetylneuraminate: step 2/5. Catalyzes the phosphorylation of N-acetylmannosamine (ManNAc) to ManNAc-6-P. The sequence is that of N-acetylmannosamine kinase from Escherichia coli O139:H28 (strain E24377A / ETEC).